A 243-amino-acid chain; its full sequence is Octanoyltransferase (243 aa).

The BPL/LPL catalytic domain occupies 49-227; sequence PLAPQAVWLL…SLSDRFGLVW (179 aa). Residues 91 to 98, 158 to 160, and 171 to 173 each bind substrate; these read RGGEVTHH, AIG, and GLA. Catalysis depends on Cys-189, which acts as the Acyl-thioester intermediate.

The protein belongs to the LipB family.

It localises to the cytoplasm. It carries out the reaction octanoyl-[ACP] + L-lysyl-[protein] = N(6)-octanoyl-L-lysyl-[protein] + holo-[ACP] + H(+). The protein operates within protein modification; protein lipoylation via endogenous pathway; protein N(6)-(lipoyl)lysine from octanoyl-[acyl-carrier-protein]: step 1/2. Catalyzes the transfer of endogenously produced octanoic acid from octanoyl-acyl-carrier-protein onto the lipoyl domains of lipoate-dependent enzymes. Lipoyl-ACP can also act as a substrate although octanoyl-ACP is likely to be the physiological substrate. The polypeptide is Octanoyltransferase (Prochlorococcus marinus (strain MIT 9313)).